The chain runs to 397 residues: MSASFSPHTITLIKSTVPLLAEHGTTIIEAMYHRLFEDPQIEALFNQANQKNGTQIHALAGAILAYARNIDNPGVLASAIERIAQKHVGYAIHPEHYPHVATALLGAIKKVLGDVATSEVLEAWGEAYWFIANLLKDREAVIREGIMTKNGGWIHWRRFVISKRIPESETITSFMLHPEDGGPVVPHQAGQYLTFRFDAAGMPGMKRNYSISCGPNSDHYRITVKREHGTGASAFLHDQAKVGTIIECTPPVGDFFLPSVIERPIVLLSGGVGLTPMVSMMEQIAEAHPDAQVWYVHGTQNRETHAMDAHIRALVSRHKHMKATTFYTQRREADDAEAGFITIDWLRANTPFQKADFYLCGPRPFLRTFVRDLIGAGVPAVQVHYEFFGPMDEEMAA.

In terms of domain architecture, Globin spans 4-140; the sequence is SFSPHTITLI…IANLLKDREA (137 aa). Heme b is bound at residue His-87. Active-site charge relay system residues include Tyr-97 and Glu-139. Residues 151 to 397 are reductase; it reads GGWIHWRRFV…FGPMDEEMAA (247 aa). The 105-residue stretch at 154-258 folds into the FAD-binding FR-type domain; that stretch reads IHWRRFVISK…TPPVGDFFLP (105 aa). Residues Tyr-192 and 207-210 contribute to the FAD site; that span reads RNYS. 271–276 is a binding site for NADP(+); it reads GVGLTP. 387–390 is an FAD binding site; sequence FFGP.

It belongs to the globin family. Two-domain flavohemoproteins subfamily. This sequence in the C-terminal section; belongs to the flavoprotein pyridine nucleotide cytochrome reductase family. Heme b serves as cofactor. Requires FAD as cofactor.

The enzyme catalyses 2 nitric oxide + NADPH + 2 O2 = 2 nitrate + NADP(+) + H(+). It catalyses the reaction 2 nitric oxide + NADH + 2 O2 = 2 nitrate + NAD(+) + H(+). Functionally, is involved in NO detoxification in an aerobic process, termed nitric oxide dioxygenase (NOD) reaction that utilizes O(2) and NAD(P)H to convert NO to nitrate, which protects the bacterium from various noxious nitrogen compounds. Therefore, plays a central role in the inducible response to nitrosative stress. The polypeptide is Flavohemoprotein (Xylella fastidiosa (strain 9a5c)).